An 85-amino-acid polypeptide reads, in one-letter code: MGKTISFSAIILVFLLVSTGLMKQGDAQAQKCEWECKLLPNFPCWLKGAGEGLCDNLCKYEGAISGVCVSDPHRCLCRNRKPGCS.

An N-terminal signal peptide occupies residues 1–29 (MGKTISFSAIILVFLLVSTGLMKQGDAQA). Intrachain disulfides connect cysteine 32–cysteine 84, cysteine 44–cysteine 68, cysteine 54–cysteine 75, and cysteine 58–cysteine 77.

It belongs to the DEFL family.

The protein resides in the secreted. The protein is Defensin-like protein 11 of Arabidopsis thaliana (Mouse-ear cress).